A 456-amino-acid chain; its full sequence is 3-isopropylmalate dehydratase large subunit (456 aa).

Residues Cys-336, Cys-396, and Cys-399 each coordinate [4Fe-4S] cluster.

This sequence belongs to the aconitase/IPM isomerase family. LeuC type 1 subfamily. In terms of assembly, heterodimer of LeuC and LeuD. The cofactor is [4Fe-4S] cluster.

The catalysed reaction is (2R,3S)-3-isopropylmalate = (2S)-2-isopropylmalate. The protein operates within amino-acid biosynthesis; L-leucine biosynthesis; L-leucine from 3-methyl-2-oxobutanoate: step 2/4. Its function is as follows. Catalyzes the isomerization between 2-isopropylmalate and 3-isopropylmalate, via the formation of 2-isopropylmaleate. This is 3-isopropylmalate dehydratase large subunit from Staphylococcus saprophyticus subsp. saprophyticus (strain ATCC 15305 / DSM 20229 / NCIMB 8711 / NCTC 7292 / S-41).